Reading from the N-terminus, the 406-residue chain is 12S rRNA N(4)-cytidine methyltransferase METTL15 (406 aa).

A mitochondrion-targeting transit peptide spans 1 to 22 (MLRYPYFYRTYNRLFSHFVDSG). S-adenosyl-L-methionine contacts are provided by residues 100–102 (GGH), Asp119, Phe146, Asp169, and Gln176. Ser358 bears the Phosphoserine mark.

It belongs to the methyltransferase superfamily. RsmH family.

The protein localises to the mitochondrion matrix. The enzyme catalyses cytidine(839) in 12S rRNA + S-adenosyl-L-methionine = N(4)-methylcytidine(839) in 12S rRNA + S-adenosyl-L-homocysteine + H(+). In terms of biological role, N4-methylcytidine (m4C) methyltransferase responsible for the methylation of position C839 in mitochondrial 12S rRNA. Involved in the stabilization of 12S rRNA folding, therefore facilitating the assembly of the mitochondrial small ribosomal subunits. The protein is 12S rRNA N(4)-cytidine methyltransferase METTL15 of Mus musculus (Mouse).